The following is a 447-amino-acid chain: Trigger factor (447 aa).

Residues 159-244 (GDMLLMQVES…VREIKEEKLP (86 aa)) enclose the PPIase FKBP-type domain.

The protein belongs to the FKBP-type PPIase family. Tig subfamily.

The protein resides in the cytoplasm. It carries out the reaction [protein]-peptidylproline (omega=180) = [protein]-peptidylproline (omega=0). Functionally, involved in protein export. Acts as a chaperone by maintaining the newly synthesized protein in an open conformation. Functions as a peptidyl-prolyl cis-trans isomerase. The chain is Trigger factor from Dehalococcoides mccartyi (strain ATCC BAA-2100 / JCM 16839 / KCTC 5957 / BAV1).